The following is a 169-amino-acid chain: Disulfide bond formation protein B 1 (169 aa).

Residues 1 to 14 (MSEETIRLGRERRY) lie on the Cytoplasmic side of the membrane. A helical membrane pass occupies residues 15–31 (LVLLGIICLALIGGALY). Residues 32-49 (MQIVLGEAPCPLCILQRY) are Periplasmic-facing. A disulfide bridge connects residues cysteine 41 and cysteine 44. The chain crosses the membrane as a helical span at residues 50-64 (ALLLIALFAFIGAAM). The Cytoplasmic portion of the chain corresponds to 65 to 71 (RTRRSIT). A helical transmembrane segment spans residues 72–89 (VFEVLVVICAIAGAGVAG). At 90-144 (HHVYTQFYPAVSCGIDVLQPIVDDLPLAKIFPLGFQVDGFCSTPYPPILGLSLAQ) the chain is on the periplasmic side. Residues cysteine 102 and cysteine 130 are joined by a disulfide bond. Residues 145–163 (WALVAFVLVVILVPLLTSR) form a helical membrane-spanning segment. At 164–169 (NRKALR) the chain is on the cytoplasmic side.

The protein belongs to the DsbB family.

The protein resides in the cell inner membrane. Functionally, required for disulfide bond formation in some periplasmic proteins. Acts by oxidizing the DsbA protein. The polypeptide is Disulfide bond formation protein B 1 (Pseudomonas fluorescens (strain Pf0-1)).